The chain runs to 209 residues: Putative 3-methyladenine DNA glycosylase (209 aa).

This sequence belongs to the DNA glycosylase MPG family.

In Lactiplantibacillus plantarum (strain ATCC BAA-793 / NCIMB 8826 / WCFS1) (Lactobacillus plantarum), this protein is Putative 3-methyladenine DNA glycosylase.